A 59-amino-acid chain; its full sequence is Large ribosomal subunit protein bL33 (59 aa).

It belongs to the bacterial ribosomal protein bL33 family.

The sequence is that of Large ribosomal subunit protein bL33 from Borrelia turicatae (strain 91E135).